A 455-amino-acid polypeptide reads, in one-letter code: ATP-dependent protease ATPase subunit HslU (455 aa).

ATP contacts are provided by residues isoleucine 19 and 61-66 (GVGKTE). The disordered stretch occupies residues 144–163 (ESKVGFANEPAEDAASKKEK). Positions 268, 333, and 405 each coordinate ATP.

The protein belongs to the ClpX chaperone family. HslU subfamily. A double ring-shaped homohexamer of HslV is capped on each side by a ring-shaped HslU homohexamer. The assembly of the HslU/HslV complex is dependent on binding of ATP.

Its subcellular location is the cytoplasm. ATPase subunit of a proteasome-like degradation complex; this subunit has chaperone activity. The binding of ATP and its subsequent hydrolysis by HslU are essential for unfolding of protein substrates subsequently hydrolyzed by HslV. HslU recognizes the N-terminal part of its protein substrates and unfolds these before they are guided to HslV for hydrolysis. In Francisella tularensis subsp. holarctica (strain FTNF002-00 / FTA), this protein is ATP-dependent protease ATPase subunit HslU.